Consider the following 484-residue polypeptide: ATP-dependent rRNA helicase RRP3 (484 aa).

Composition is skewed to low complexity over residues 1–14 (MPSP…SMSQ) and 22–34 (PSPA…APEA). Positions 1–38 (MPSPSPEASSSMSQPGPPSRSPSPASSNPDAPEASHNK) are disordered. Positions 38 to 66 (KTFADLGISPELCRACASMGFKKPSDIQA) match the Q motif motif. The Helicase ATP-binding domain occupies 69–240 (IPHALEGKDI…RASLNKPVRV (172 aa)). 82–89 (AQTGSGKT) is a binding site for ATP. The short motif at 188 to 191 (DEAD) is the DEAD box element. The 149-residue stretch at 263-411 (NKDAYLLYLA…SFDVDKEAVA (149 aa)) folds into the Helicase C-terminal domain. The segment at 425–484 (ALEMRESGTGGGGGKRGRDKGKRKTFGDGDDRDRDDDVVEAGVPRKKNKFTPGGKKKARK) is disordered. Basic residues-rich tracts occupy residues 439–448 (KRGRDKGKRK) and 468–484 (PRKK…KARK).

This sequence belongs to the DEAD box helicase family. DDX47/RRP3 subfamily. In terms of assembly, interacts with the SSU processome.

The protein resides in the nucleus. It carries out the reaction ATP + H2O = ADP + phosphate + H(+). Functionally, ATP-dependent rRNA helicase required for pre-ribosomal RNA processing. Involved in the maturation of the 35S-pre-rRNA and to its cleavage to mature 18S rRNA. This chain is ATP-dependent rRNA helicase RRP3, found in Cryptococcus neoformans var. neoformans serotype D (strain B-3501A) (Filobasidiella neoformans).